The chain runs to 226 residues: Ribonuclease 3 (226 aa).

The RNase III domain occupies 6–128 (INRLQRKLGY…LIGGVFLDSD (123 aa)). E41 serves as a coordination point for Mg(2+). The active site involves D45. Mg(2+)-binding residues include D114 and E117. E117 is an active-site residue. The 71-residue stretch at 155-225 (DPKTRLQEYL…AEQALKKLEL (71 aa)) folds into the DRBM domain.

It belongs to the ribonuclease III family. Homodimer. The cofactor is Mg(2+).

It localises to the cytoplasm. The catalysed reaction is Endonucleolytic cleavage to 5'-phosphomonoester.. Functionally, digests double-stranded RNA. Involved in the processing of primary rRNA transcript to yield the immediate precursors to the large and small rRNAs (23S and 16S). Processes some mRNAs, and tRNAs when they are encoded in the rRNA operon. Processes pre-crRNA and tracrRNA of type II CRISPR loci if present in the organism. The chain is Ribonuclease 3 from Klebsiella pneumoniae (strain 342).